A 51-amino-acid chain; its full sequence is uncharacterized protein (51 aa).

The helical transmembrane segment at Asn-20–Ala-42 threads the bilayer.

It is found in the membrane. This is an uncharacterized protein from Schizosaccharomyces pombe (strain 972 / ATCC 24843) (Fission yeast).